The sequence spans 381 residues: Creatine kinase M-type (381 aa).

The Phosphagen kinase N-terminal domain occupies 11-98 (KLNYKSEEEY…FDPIIQDRHG (88 aa)). The 243-residue stretch at 125 to 367 (YVLSSRVRTG…KLMVEMEKKL (243 aa)) folds into the Phosphagen kinase C-terminal domain. Position 128–132 (128–132 (SSRVR)) interacts with ATP. Serine 164 carries the post-translational modification Phosphoserine. Threonine 166 bears the Phosphothreonine mark. Serine 178 is modified (phosphoserine). At threonine 180 the chain carries Phosphothreonine. Position 191 (histidine 191) interacts with ATP. A Phosphoserine modification is found at serine 199. Residues arginine 236 and arginine 292 each contribute to the ATP site. 2 positions are modified to phosphothreonine: threonine 313 and threonine 322. Position 320–325 (320–325 (RGTGGV)) interacts with ATP. At serine 372 the chain carries Phosphoserine.

It belongs to the ATP:guanido phosphotransferase family. In terms of assembly, dimer of identical or non-identical chains, which can be either B (brain type) or M (muscle type). With MM being the major form in skeletal muscle and myocardium, MB existing in myocardium, and BB existing in many tissues, especially brain.

The enzyme catalyses creatine + ATP = N-phosphocreatine + ADP + H(+). Reversibly catalyzes the transfer of phosphate between ATP and various phosphogens (e.g. creatine phosphate). Creatine kinase isoenzymes play a central role in energy transduction in tissues with large, fluctuating energy demands, such as skeletal muscle, heart, brain and spermatozoa. The polypeptide is Creatine kinase M-type (CKM) (Oryctolagus cuniculus (Rabbit)).